The following is a 281-amino-acid chain: NNLISFTMKRIVLFLILLTKAASANLISFTFKRFNETNLILQRDATVSSGKLRITKAAENGVPTAGSLGRAFYSTPIQIWDNTTGTVAAWATSFTFNLQAPNAASPADGLAFALVPVGSQPKDKGGFLGLFDSKNYASSNQTVAVEFDTFYNGGWDPTERHIGIDVNSIKSIKTTSWDFANGENAEVLITYDSSTNLLVASLVHPSQKTSFIVSERVDLTSVLPEWVSVGFSATTGLSKGYVETNEVLSWSFASKISINKEDEENKLLISNLEGKAINNLA.

3 N-linked (GlcNAc...) asparagine glycosylation sites follow: Asn35, Asn82, and Asn140.

The protein belongs to the leguminous lectin family. Tetramer of 2 alpha and 2 beta chains. In terms of processing, glycosylated. Post-translationally, the beta chain is produced by partial proteolytic processing of the alpha chain.

Its function is as follows. D-galactose-binding lectin. The sequence is that of Lectin alpha chain from Lablab purpureus (Hyacinth bean).